We begin with the raw amino-acid sequence, 157 residues long: uncharacterized protein (157 aa).

Residues 6–157 (HDELFQAIQQ…AFFNLWIKYM (152 aa)) enclose the HTH marR-type domain. The segment at residues 66-89 (NSFLASRLHISKAAVSKAVHALLK) is a DNA-binding region (H-T-H motif).

It localises to the cytoplasm. This is an uncharacterized protein from Bacillus subtilis (strain 168).